Consider the following 255-residue polypeptide: 1-(5-phosphoribosyl)-5-[(5-phosphoribosylamino)methylideneamino] imidazole-4-carboxamide isomerase (255 aa).

Asp-8 functions as the Proton acceptor in the catalytic mechanism. Residue Asp-129 is the Proton donor of the active site.

This sequence belongs to the HisA/HisF family.

Its subcellular location is the cytoplasm. It carries out the reaction 1-(5-phospho-beta-D-ribosyl)-5-[(5-phospho-beta-D-ribosylamino)methylideneamino]imidazole-4-carboxamide = 5-[(5-phospho-1-deoxy-D-ribulos-1-ylimino)methylamino]-1-(5-phospho-beta-D-ribosyl)imidazole-4-carboxamide. It participates in amino-acid biosynthesis; L-histidine biosynthesis; L-histidine from 5-phospho-alpha-D-ribose 1-diphosphate: step 4/9. The chain is 1-(5-phosphoribosyl)-5-[(5-phosphoribosylamino)methylideneamino] imidazole-4-carboxamide isomerase from Parasynechococcus marenigrum (strain WH8102).